Reading from the N-terminus, the 211-residue chain is Dual specificity protein phosphatase 26 (211 aa).

The region spanning 60 to 207 (NHADEVWPGL…LLALDRRLRQ (148 aa)) is the Tyrosine-protein phosphatase domain. Catalysis depends on Cys-152, which acts as the Phosphocysteine intermediate.

The protein belongs to the protein-tyrosine phosphatase family. Non-receptor class dual specificity subfamily. As to quaternary structure, interacts with HSF4.

The protein localises to the cytoplasm. Its subcellular location is the nucleus. The protein resides in the golgi apparatus. The enzyme catalyses O-phospho-L-tyrosyl-[protein] + H2O = L-tyrosyl-[protein] + phosphate. It carries out the reaction O-phospho-L-seryl-[protein] + H2O = L-seryl-[protein] + phosphate. The catalysed reaction is O-phospho-L-threonyl-[protein] + H2O = L-threonyl-[protein] + phosphate. Inactivates MAPK1 and MAPK3 which leads to dephosphorylation of heat shock factor protein 4 and a reduction in its DNA-binding activity. The chain is Dual specificity protein phosphatase 26 (Dusp26) from Rattus norvegicus (Rat).